A 179-amino-acid polypeptide reads, in one-letter code: Ribosome maturation factor RimM (179 aa).

The PRC barrel domain maps to 102–179 (DGEYYWYQLE…EMKVEWDADF (78 aa)).

It belongs to the RimM family. Binds ribosomal protein uS19.

The protein localises to the cytoplasm. An accessory protein needed during the final step in the assembly of 30S ribosomal subunit, possibly for assembly of the head region. Essential for efficient processing of 16S rRNA. May be needed both before and after RbfA during the maturation of 16S rRNA. It has affinity for free ribosomal 30S subunits but not for 70S ribosomes. The chain is Ribosome maturation factor RimM from Pseudomonas syringae pv. tomato (strain ATCC BAA-871 / DC3000).